A 161-amino-acid polypeptide reads, in one-letter code: Allophycocyanin alpha chain (161 aa).

At asparagine 71 the chain carries N4-methylasparagine. Cysteine 81 serves as a coordination point for (2R,3E)-phycocyanobilin.

The protein belongs to the phycobiliprotein family. In terms of assembly, component of the phycobilisome. Heterodimer of an alpha and a beta chain. Contains one covalently linked phycocyanobilin chromophore.

The protein resides in the cellular thylakoid membrane. Functionally, light-harvesting photosynthetic bile pigment-protein from the phycobiliprotein complex. Allophycocyanin has a maximum absorption at approximately 650 nanometers. The sequence is that of Allophycocyanin alpha chain (apcA) from Arthrospira platensis (Spirulina platensis).